The chain runs to 750 residues: Cullin-5 (750 aa).

The Cullin neddylation domain maps to 678–739; sequence RFFKLQAAIV…QEYIRRTTDD (62 aa). Lysine 691 is covalently cross-linked (Glycyl lysine isopeptide (Lys-Gly) (interchain with G-Cter in NEDD8)).

Belongs to the cullin family. Post-translationally, neddylated; which enhances the ubiquitination activity of SCF-like complex.

Its pathway is protein modification; protein ubiquitination. Its function is as follows. Probable core component of cullin-based SCF-like E3 ubiquitin-protein ligase complexes which mediate the ubiquitination and subsequent proteasomal degradation of target proteins. The E3 ubiquitin-protein ligase activity of the complex is dependent on the neddylation of the cullin subunit. The sequence is that of Cullin-5 (culE) from Dictyostelium discoideum (Social amoeba).